The chain runs to 29 residues: Cytochrome b6-f complex subunit 8 (29 aa).

The helical transmembrane segment at isoleucine 3–valine 23 threads the bilayer.

Belongs to the PetN family. The 4 large subunits of the cytochrome b6-f complex are cytochrome b6, subunit IV (17 kDa polypeptide, PetD), cytochrome f and the Rieske protein, while the 4 small subunits are PetG, PetL, PetM and PetN. The complex functions as a dimer.

Its subcellular location is the plastid. The protein localises to the chloroplast thylakoid membrane. In terms of biological role, component of the cytochrome b6-f complex, which mediates electron transfer between photosystem II (PSII) and photosystem I (PSI), cyclic electron flow around PSI, and state transitions. The chain is Cytochrome b6-f complex subunit 8 from Phalaenopsis aphrodite subsp. formosana (Moth orchid).